We begin with the raw amino-acid sequence, 587 residues long: Thioredoxin domain-containing protein 3 (587 aa).

The Thioredoxin domain maps to 2–119 (ASKKREVQLQ…VIALIDEEKK (118 aa)). Cys39 and Cys42 are disulfide-bonded. NDK regions lie at residues 157–255 (MAVI…PLEE), 313–453 (VQRT…STLA), and 454–587 (LIKP…NFEN).

This sequence in the C-terminal section; belongs to the NDK family. As to quaternary structure, monomer. Testis-specific.

The protein localises to the cytoplasm. In terms of biological role, probably required during the final stages of sperm tail maturation in the testis and/or epididymis, where extensive disulfide bonding of fibrous sheath (FS) proteins occurs. In vitro, it has neither nucleoside diphosphate kinase (NDPK) activity nor reducing activity on disulfide bonds. Exhibits a 3'-5' exonuclease activity with a preference for single-stranded DNA, suggesting roles in DNA proofreading and repair. The chain is Thioredoxin domain-containing protein 3 (Nme8) from Rattus norvegicus (Rat).